The following is a 343-amino-acid chain: Isopentenyl-diphosphate delta-isomerase (343 aa).

Residue 6–7 (RK) participates in substrate binding. Residues Ser-63, 64 to 66 (SMT), Ser-94, and Asn-122 each bind FMN. Substrate is bound at residue 94–96 (SMR). Position 157 (Gln-157) interacts with substrate. Glu-158 contributes to the Mg(2+) binding site. FMN-binding positions include Lys-189, Thr-219, 269 to 271 (GLK), and 290 to 291 (AG).

It belongs to the IPP isomerase type 2 family. As to quaternary structure, homooctamer. Dimer of tetramers. FMN serves as cofactor. The cofactor is NADPH. It depends on Mg(2+) as a cofactor.

It is found in the cytoplasm. It catalyses the reaction isopentenyl diphosphate = dimethylallyl diphosphate. Its function is as follows. Involved in the biosynthesis of isoprenoids. Catalyzes the 1,3-allylic rearrangement of the homoallylic substrate isopentenyl (IPP) to its allylic isomer, dimethylallyl diphosphate (DMAPP). The sequence is that of Isopentenyl-diphosphate delta-isomerase from Rickettsia bellii (strain OSU 85-389).